The sequence spans 236 residues: 15,16-dihydrobiliverdin:ferredoxin oxidoreductase (236 aa).

Belongs to the HY2 family.

The catalysed reaction is 15,16-dihydrobiliverdin + oxidized 2[4Fe-4S]-[ferredoxin] = biliverdin IXalpha + reduced 2[4Fe-4S]-[ferredoxin] + 2 H(+). In terms of biological role, catalyzes the two-electron reduction of biliverdin IX-alpha at the C15 methine bridge. The polypeptide is 15,16-dihydrobiliverdin:ferredoxin oxidoreductase (Prochlorococcus marinus (strain MIT 9515)).